The primary structure comprises 699 residues: MAREYKIEDYRNFGIMAHIDAGKTTTTERILYYTGKSHKIGEVHDGAATMDWMEQEQERGITITSAATTTFWKGRDGKTRRFNIIDTPGHVDFTIEVERSLRVLDGAIALLDANAGVEPQTETVWRQAEKYNVPRMIFCNKMDKTGADFYRSVEMIKTRLGATAVVMQLPIGAETEFKGVIDLIEMNALIWRDESLGAQWDVVEIPEDMKAKAEEYREKLIETVVDIDEAAMEAYLEGILPDNDQIRALVRRGTIDVKFHPMFCGTAFKNKGVQPLLDAVVDYLPSPMDIPAIKGIDFKTEADIERHADDAEPLSMLAFKIMNDPFVGSLTFARIYSGKLEKGASVMNTVKDKRERVGRMLQMHSNSREDIEEAFAGDIVALAGLKETTTGDTLCDPLKPVILERMEFPEPVIQIAIEPKTKGDQEKMGLALNRLAAEDPSFRVKTDQESGQTIIAGMGELHLDIIVDRMRREFKVEATVGAPQVAYRETITRQHEEDYTHKKQSGGTGQFARVKIVFEPNPEGDDFKFESKIVGGSVPKEYIPGVQKGIESVLSSGPLAGFPMLGVKATLIDGAFHDVDSSVLAFEIASRACFREAAKKAGAQLLEPMMKVEVVTPEDYVGDVIGDLNSRRGQIQGQESRGIAVVINANVPLANMFKYVDNLRSMSQGRAQYTMTFDHYSPVPSNVATEIQAKYSGQK.

One can recognise a tr-type G domain in the interval 8–288 (EDYRNFGIMA…AVVDYLPSPM (281 aa)). GTP is bound by residues 17-24 (AHIDAGKT), 86-90 (DTPGH), and 140-143 (NKMD).

Belongs to the TRAFAC class translation factor GTPase superfamily. Classic translation factor GTPase family. EF-G/EF-2 subfamily.

Its subcellular location is the cytoplasm. In terms of biological role, catalyzes the GTP-dependent ribosomal translocation step during translation elongation. During this step, the ribosome changes from the pre-translocational (PRE) to the post-translocational (POST) state as the newly formed A-site-bound peptidyl-tRNA and P-site-bound deacylated tRNA move to the P and E sites, respectively. Catalyzes the coordinated movement of the two tRNA molecules, the mRNA and conformational changes in the ribosome. The polypeptide is Elongation factor G (Rhizobium leguminosarum bv. trifolii (strain WSM2304)).